Consider the following 459-residue polypeptide: Argininosuccinate lyase (459 aa).

It belongs to the lyase 1 family. Argininosuccinate lyase subfamily.

The protein localises to the cytoplasm. It catalyses the reaction 2-(N(omega)-L-arginino)succinate = fumarate + L-arginine. It functions in the pathway amino-acid biosynthesis; L-arginine biosynthesis; L-arginine from L-ornithine and carbamoyl phosphate: step 3/3. The sequence is that of Argininosuccinate lyase from Geobacillus kaustophilus (strain HTA426).